A 237-amino-acid polypeptide reads, in one-letter code: Probable transcriptional regulatory protein EAT1b_0153 (237 aa).

The protein belongs to the TACO1 family. YeeN subfamily.

The protein resides in the cytoplasm. This is Probable transcriptional regulatory protein EAT1b_0153 from Exiguobacterium sp. (strain ATCC BAA-1283 / AT1b).